A 414-amino-acid chain; its full sequence is Sex comb on midleg-like protein 4 (414 aa).

Residues serine 55 and serine 65 each carry the phosphoserine modification. Polar residues predominate over residues 257-276 (HRGSLHPSSSLYCKRQNSGD). Residues 257-343 (HRGSLHPSSS…DARRPRSRNP (87 aa)) form a disordered region. Residues 284–304 (AATAGGPRTSPMSSGGPSAPG) are compositionally biased toward low complexity. Positions 288–354 (GGPRTSPMSS…AWTVEDVVWF (67 aa)) constitute an SAM domain. Polar residues predominate over residues 312–332 (PKRNTTSLEGNRCASSPSQDA).

The protein belongs to the SCM family.

Its subcellular location is the nucleus. Putative Polycomb group (PcG) protein. PcG proteins act by forming multiprotein complexes, which are required to maintain the transcriptionally repressive state of homeotic genes throughout development. This is Sex comb on midleg-like protein 4 (SCML4) from Homo sapiens (Human).